The primary structure comprises 63 residues: Beta-defensin 35 (63 aa).

The N-terminal stretch at 1–23 is a signal peptide; the sequence is MPQTFFVFCFLFFVFLQLFPGTG. Intrachain disulfides connect Cys-31-Cys-58, Cys-38-Cys-52, and Cys-42-Cys-59.

This sequence belongs to the beta-defensin family. In terms of tissue distribution, expressed in testis, epididymis (caput, corpus and cauda), kidney and neonatal and adult brain.

Its subcellular location is the secreted. Functionally, has antibacterial activity. This chain is Beta-defensin 35 (Defb35), found in Mus musculus (Mouse).